A 387-amino-acid polypeptide reads, in one-letter code: MELNTLKSTFINNFGKEPNSLFFSPGRINLIGEHIDYNGGFVFPCPITLGTFAAASLRDDRICRAYSLNFESLGVIEFSLDDLSYKKEDNWTNYLKGVLKVLIEKGYKIDKGIDLVINGNLPNGAGLSSSASLEMLIVKILDTFFSLNISKVDAALIGKEVENTYIGVNSGIMDQFAISLGEKDKAILLDCNSLYYEYVPLNLGDNSIIIMNTNKRRELADSKYNERRKECDDSLDTLKKYTNISSLCELTSLEFETYKDKIEDSNKLRRCVHAISENERVKDAVKALKENNLELFGQLMNQSHISLRDDYEVTGKELDTLAENAWKQPGVLGARMTGAGFGGCAIAIVNNAHVDEFIKNVGQAYKDAIGYEASFYVASIGNGPTEL.

A substrate-binding site is contributed by 33-36 (EHID). ATP contacts are provided by residues S67 and 124–130 (GAGLSSS). Mg(2+) is bound by residues S130 and E162. Residue D174 is the Proton acceptor of the active site. Y224 is a binding site for substrate.

Belongs to the GHMP kinase family. GalK subfamily.

The protein resides in the cytoplasm. It catalyses the reaction alpha-D-galactose + ATP = alpha-D-galactose 1-phosphate + ADP + H(+). It functions in the pathway carbohydrate metabolism; galactose metabolism. Catalyzes the transfer of the gamma-phosphate of ATP to D-galactose to form alpha-D-galactose-1-phosphate (Gal-1-P). The polypeptide is Galactokinase (Clostridium perfringens (strain 13 / Type A)).